A 157-amino-acid polypeptide reads, in one-letter code: Small ribosomal subunit protein uS7 (157 aa).

This sequence belongs to the universal ribosomal protein uS7 family. In terms of assembly, part of the 30S ribosomal subunit. Contacts proteins S9 and S11.

Functionally, one of the primary rRNA binding proteins, it binds directly to 16S rRNA where it nucleates assembly of the head domain of the 30S subunit. Is located at the subunit interface close to the decoding center, probably blocks exit of the E-site tRNA. This is Small ribosomal subunit protein uS7 from Chlamydia pneumoniae (Chlamydophila pneumoniae).